The sequence spans 492 residues: Ammonium transporter MEP1 (492 aa).

Residues 1-18 (MESRTTGPLTTETYDGPT) are Extracellular-facing. A helical membrane pass occupies residues 19-39 (VAFMILGAALVFFMVPGLGFL). At 40 to 49 (YSGLARRKSA) the chain is on the cytoplasmic side. A helical membrane pass occupies residues 50 to 70 (LALIWVVLMATLVGILQWYFW). Over 71–109 (GYSLAFSKSAPNNKFIGNLDSFGFRNVYGKKFDEDAYPE) the chain is Extracellular. The chain crosses the membrane as a helical span at residues 110–130 (LAYATFQMMFSCVNLSIIAGA). Topologically, residues 131-140 (TAERGRLLPH) are cytoplasmic. A helical membrane pass occupies residues 141–161 (MVFLFILATIGYCPVTYWIWS). Residues 162 to 174 (PGGWAYQWGVLDW) lie on the Extracellular side of the membrane. A helical membrane pass occupies residues 175-195 (AGGGNIEILSAVSGFVYSWFL). The Cytoplasmic portion of the chain corresponds to 196–210 (GKRNEKLLINFRPHN). A helical transmembrane segment spans residues 211–231 (VSLVTLGTSILWFGWLLFNSA). Residues 232 to 240 (SSLSPNLRS) lie on the Extracellular side of the membrane. A helical membrane pass occupies residues 241-261 (VYAFMNTCLSAITGGMTWCLL). Over 262-268 (DYRSEKK) the chain is Cytoplasmic. The chain crosses the membrane as a helical span at residues 269-289 (WSTVGLCSGIISGLVAATPSS). Glycine 290 is a topological domain (extracellular). A helical transmembrane segment spans residues 291 to 311 (CITLYGSLIQGIVAGVVCNFA). Topologically, residues 312–331 (TKLKYYAKVDDAMDILAEHG) are cytoplasmic. Residues 332–352 (VAGVIGLIFNALFGADWVIGM) form a helical membrane-spanning segment. Residues 353-373 (DGTTEHEGGWVTHNYKQMYKQ) lie on the Extracellular side of the membrane. The helical transmembrane segment at 374 to 394 (IAYIAASIGYTAAVTAIICFV) threads the bilayer. Over 395 to 492 (LGYIPGMRLR…PIHQEDPANR (98 aa)) the chain is Cytoplasmic. Phosphoserine is present on residues serine 442 and serine 445. A disordered region spans residues 455–492 (HLAAERSSSGTNSSSDGNGEMIQSEKILPIHQEDPANR). Positions 461 to 473 (SSSGTNSSSDGNG) are enriched in low complexity.

Belongs to the ammonia transporter channel (TC 1.A.11.2) family.

It is found in the membrane. Its function is as follows. Transporter for ammonium (both charged and uncharged NH3 and NH4) to use as a nitrogen source. Can also transport methylamine. The affinity of MEP1 is about twenty times lower than that of MEP2. MEP3 has the lowest affinity. This chain is Ammonium transporter MEP1 (MEP1), found in Saccharomyces cerevisiae (strain ATCC 204508 / S288c) (Baker's yeast).